A 359-amino-acid chain; its full sequence is Tropomodulin-1 (359 aa).

Residues P39–P61 are disordered. The tract at residues P39 to H138 is tropomyosin-binding.

This sequence belongs to the tropomodulin family. As to quaternary structure, binds to the N-terminus of tropomyosin and to actin. Interacts with FLII.

It is found in the cytoplasm. The protein resides in the cytoskeleton. Blocks the elongation and depolymerization of the actin filaments at the pointed end. The Tmod/TM complex contributes to the formation of the short actin protofilament, which in turn defines the geometry of the membrane skeleton. May play an important role in regulating the organization of actin filaments by preferentially binding to a specific tropomyosin isoform at its N-terminus. The polypeptide is Tropomodulin-1 (TMOD1) (Bos taurus (Bovine)).